The sequence spans 330 residues: Putative aminopeptidase (330 aa).

His65 and Asp168 together coordinate a divalent metal cation. The active-site Proton acceptor is Glu198. The a divalent metal cation site is built by Glu199, Asp221, and His307.

This sequence belongs to the peptidase M42 family. Requires a divalent metal cation as cofactor.

This Acetivibrio thermocellus (Hungateiclostridium thermocellum) protein is Putative aminopeptidase (celM).